Reading from the N-terminus, the 226-residue chain is MIHIAIAEDDFRVAQIHERLIKQLDGFKIIGKAANAKETLALLKEHKADLLLLDIYMPDELGTALIPDIRSRFPEVDIMIITAATETRHLQEALRAGIAHYLIKPVTADKFRQVLLQYKEKRKLLMSQPEVSQSMIDHIFGNGVKTALPAEDLPTGINSITLRKIKEALQTASEGLTAEELGEKMGASRTTARRYAEYLVSKEEARAELEYGIIGRPERKYYLAAD.

The region spanning 3-119 (HIAIAEDDFR…KFRQVLLQYK (117 aa)) is the Response regulatory domain. Residue aspartate 54 is modified to 4-aspartylphosphate. The H-T-H motif DNA-binding region spans 178–197 (AEELGEKMGASRTTARRYAE).

Phosphorylated by CitS.

The protein localises to the cytoplasm. Member of the two-component regulatory system CitT/CitS. Regulates the expression of the citM-yflN operon. Phosphorylated CitT binds to the citM promoter to activate the transcription of the citM-yflN operon. This Bacillus subtilis (strain 168) protein is Transcriptional regulatory protein CitT (citT).